The chain runs to 218 residues: 25.3 kDa vesicle transport protein SEC22-1 (218 aa).

The Cytoplasmic segment spans residues 1–192 (MVKMTLIARV…DKAKDLNRQA (192 aa)). One can recognise a Longin domain in the interval 6–120 (LIARVTDGLP…YAFIKFDTFI (115 aa)). The region spanning 135-195 (NIAKLNDELY…KDLNRQALIR (61 aa)) is the v-SNARE coiled-coil homology domain. Residues 193–213 (LIRKWAPVAIVFGVVFLLFWV) traverse the membrane as a helical; Anchor for type IV membrane protein segment. Over 214–218 (KNKLW) the chain is Vesicular.

It belongs to the synaptobrevin family. Interacts with SEC24A. As to expression, mainly expressed in flowers and siliques, to a lower extent in seedlings, and barely in roots and leaves.

It localises to the golgi apparatus membrane. The protein resides in the endoplasmic reticulum membrane. Functionally, V-SNARE involved in vesicle trafficking from the ER to the Golgi complex and required for early secretion. Involved in endoplasmic reticulum (ER) biogenesis and functions as well as for Golgi-stack integrity. Essential for gametophytes development. Involved in cesium Cs(+) accumulation, a non-essential cation. The polypeptide is 25.3 kDa vesicle transport protein SEC22-1 (Arabidopsis thaliana (Mouse-ear cress)).